A 492-amino-acid chain; its full sequence is Catalase-4 (492 aa).

Active-site residues include histidine 65 and asparagine 138. Tyrosine 348 provides a ligand contact to heme.

It belongs to the catalase family. As to quaternary structure, homotetramer. It depends on heme as a cofactor.

The protein localises to the peroxisome. The protein resides in the glyoxysome. The enzyme catalyses 2 H2O2 = O2 + 2 H2O. Its function is as follows. Occurs in almost all aerobically respiring organisms and serves to protect cells from the toxic effects of hydrogen peroxide. The protein is Catalase-4 (CAT4) of Glycine max (Soybean).